The primary structure comprises 395 residues: S-adenosylmethionine synthase (395 aa).

His-19 contributes to the ATP binding site. Mg(2+) is bound at residue Asp-21. Glu-47 is a K(+) binding site. Glu-60 and Gln-103 together coordinate L-methionine. Residues Gln-103–Ser-113 form a flexible loop region. Residues Asp-170–Lys-172, Lys-236–Phe-237, Asp-245, Arg-251–Lys-252, Ala-268, and Lys-272 contribute to the ATP site. Asp-245 is a binding site for L-methionine. Lys-276 lines the L-methionine pocket.

The protein belongs to the AdoMet synthase family. As to quaternary structure, homotetramer; dimer of dimers. Mg(2+) is required as a cofactor. It depends on K(+) as a cofactor.

It is found in the cytoplasm. It carries out the reaction L-methionine + ATP + H2O = S-adenosyl-L-methionine + phosphate + diphosphate. The protein operates within amino-acid biosynthesis; S-adenosyl-L-methionine biosynthesis; S-adenosyl-L-methionine from L-methionine: step 1/1. Its function is as follows. Catalyzes the formation of S-adenosylmethionine (AdoMet) from methionine and ATP. The overall synthetic reaction is composed of two sequential steps, AdoMet formation and the subsequent tripolyphosphate hydrolysis which occurs prior to release of AdoMet from the enzyme. This Rhodopirellula baltica (strain DSM 10527 / NCIMB 13988 / SH1) protein is S-adenosylmethionine synthase.